Consider the following 416-residue polypeptide: Putative cell agglutination protein SPAC1348.08c (416 aa).

An N-terminal signal peptide occupies residues 1–27; that stretch reads MNFFLYFRTIFLIQLYFFNYSTFGCSA. N19 carries an N-linked (GlcNAc...) asparagine glycan. 2 repeat units span residues 90-124 and 125-160. The 2 X 36 AA approximate tandem repeats stretch occupies residues 90-160; that stretch reads GTVTETTISG…GTVEIVSPKN (71 aa). The PA14 domain maps to 224-390; it reads FNEPAYFGSS…GPLATTSYSY (167 aa). N344 carries an N-linked (GlcNAc...) asparagine glycan.

The protein resides in the cell surface. Its function is as follows. May be involved in agglutination during conjugation or other aspects of colony formation. The sequence is that of Putative cell agglutination protein SPAC1348.08c from Schizosaccharomyces pombe (strain 972 / ATCC 24843) (Fission yeast).